A 219-amino-acid chain; its full sequence is MDTWHDALGGEKQQPYFQEILNAVRQERLSGQIIYPPAADVFNAFRLTAFDRVKAVILGQDPYHGAGQAHGLAFSVRQGIRIPPSLLNIYKELETDIEGFSIPAHGCLTAWAEQGVLLLNTVLTVRAGQAHSHALLGWERFTDTVIRQLATHRKHLVFMLWGGYAQQKRKLIDSQNYLILTAPHPSPLSAYRGFFGCRHFSQANSYLSRHGIDPINWKL.

Aspartate 61 acts as the Proton acceptor in catalysis.

This sequence belongs to the uracil-DNA glycosylase (UDG) superfamily. UNG family.

The protein resides in the cytoplasm. The catalysed reaction is Hydrolyzes single-stranded DNA or mismatched double-stranded DNA and polynucleotides, releasing free uracil.. Its function is as follows. Excises uracil residues from the DNA which can arise as a result of misincorporation of dUMP residues by DNA polymerase or due to deamination of cytosine. In Neisseria meningitidis serogroup A / serotype 4A (strain DSM 15465 / Z2491), this protein is Uracil-DNA glycosylase.